Here is a 483-residue protein sequence, read N- to C-terminus: FAD-dependent oxidoreductase oblC (483 aa).

Residues 1–21 (MRSVTSLVSFSACLLASSVTA) form the signal peptide. N-linked (GlcNAc...) asparagine glycans are attached at residues Asn-100, Asn-137, Asn-190, and Asn-240.

This sequence belongs to the beta-cyclopiazonate dehydrogenase family. FAD serves as cofactor.

It functions in the pathway secondary metabolite biosynthesis; terpenoid biosynthesis. Functionally, FAD-dependent oxidoreductase; part of the gene cluster that mediates the biosynthesis of the sesterterpenes ophiobolins, fungal phytotoxins with potential anti-cancer activities. The first step of the pathway is performed by the sesterterpene synthase oblA that possesses both prenyl transferase and terpene cyclase activity, converting isopentenyl diphosphate and dimethylallyl diphosphate into geranylfarnesyl diphosphate (GFPP) and further converting GFPP into ophiobolin F, respectively. Other sesterterpenoids (C(25) terpenoids) are found as minor products of oblA. The cytochrome P450 monooxygenase oblB then catalyzes a four-step oxidative transformation of ophiobolin F to yield ophiobolin C. The FAD-dependent oxidoreductase oblC might be involved in a later oxidation step that produces ophiobolin A. The polypeptide is FAD-dependent oxidoreductase oblC (Cochliobolus heterostrophus (strain C5 / ATCC 48332 / race O) (Southern corn leaf blight fungus)).